Consider the following 129-residue polypeptide: Putative membrane protein insertion efficiency factor (129 aa).

Belongs to the UPF0161 family.

The protein resides in the cell inner membrane. Its function is as follows. Could be involved in insertion of integral membrane proteins into the membrane. This Rhodopseudomonas palustris (strain TIE-1) protein is Putative membrane protein insertion efficiency factor.